A 435-amino-acid polypeptide reads, in one-letter code: D-amino acid dehydrogenase (435 aa).

Position 3-17 (3-17) interacts with FAD; it reads VIVLGGGVLGVSTAW.

Belongs to the DadA oxidoreductase family. The cofactor is FAD.

It catalyses the reaction a D-alpha-amino acid + A + H2O = a 2-oxocarboxylate + AH2 + NH4(+). It functions in the pathway amino-acid degradation; D-alanine degradation; NH(3) and pyruvate from D-alanine: step 1/1. Functionally, oxidative deamination of D-amino acids. This Chromobacterium violaceum (strain ATCC 12472 / DSM 30191 / JCM 1249 / CCUG 213 / NBRC 12614 / NCIMB 9131 / NCTC 9757 / MK) protein is D-amino acid dehydrogenase.